Reading from the N-terminus, the 318-residue chain is Ribonuclease Z (318 aa).

Zn(2+)-binding residues include His62, His64, Asp66, His67, His140, Asp211, and His269. Asp66 (proton acceptor) is an active-site residue.

It belongs to the RNase Z family. In terms of assembly, homodimer. The cofactor is Zn(2+).

It catalyses the reaction Endonucleolytic cleavage of RNA, removing extra 3' nucleotides from tRNA precursor, generating 3' termini of tRNAs. A 3'-hydroxy group is left at the tRNA terminus and a 5'-phosphoryl group is left at the trailer molecule.. Zinc phosphodiesterase, which displays some tRNA 3'-processing endonuclease activity. Probably involved in tRNA maturation, by removing a 3'-trailer from precursor tRNA. The sequence is that of Ribonuclease Z from Brevibacillus brevis (strain 47 / JCM 6285 / NBRC 100599).